We begin with the raw amino-acid sequence, 199 residues long: uncharacterized protein (199 aa).

Helical transmembrane passes span leucine 10–tyrosine 32, valine 37–tyrosine 59, leucine 63–isoleucine 80, leucine 83–leucine 100, tyrosine 104–phenylalanine 121, leucine 126–threonine 148, and phenylalanine 163–isoleucine 185.

It is found in the cell membrane. This is an uncharacterized protein from Archaeoglobus fulgidus (strain ATCC 49558 / DSM 4304 / JCM 9628 / NBRC 100126 / VC-16).